The sequence spans 409 residues: Lactadherin (409 aa).

2 EGF-like domains span residues 2–41 (SGDF…LICN) and 44–88 (EKGP…IHCE). 3 cysteine pairs are disulfide-bonded: cysteine 6-cysteine 17, cysteine 11-cysteine 29, and cysteine 31-cysteine 40. The N-linked (GlcNAc...) asparagine glycan is linked to asparagine 41. Intrachain disulfides connect cysteine 48-cysteine 59, cysteine 53-cysteine 76, cysteine 78-cysteine 87, cysteine 91-cysteine 247, cysteine 234-cysteine 238, and cysteine 252-cysteine 409. Positions 67–69 (RGD) match the Cell attachment site motif. 2 F5/8 type C domains span residues 91-247 (CNAP…LLGC) and 252-409 (CAEP…LLGC). Residue asparagine 372 is glycosylated (N-linked (GlcNAc...) asparagine).

In terms of tissue distribution, mammary epithelial cell surfaces and spermatozoan. Also present in testis, epididymis, uterus, adrenal gland, tonsil, muscle, heart, lymphatic gland, thymus and kidney but not spleen, liver, lung or brain.

The protein resides in the membrane. Its subcellular location is the secreted. It localises to the cytoplasmic vesicle. The protein localises to the secretory vesicle. It is found in the acrosome membrane. Functionally, contributes to phagocytic removal of apoptotic cells in many tissues. Plays an important role in the maintenance of intestinal epithelial homeostasis and the promotion of mucosal healing. Promotes VEGF-dependent neovascularization. Specific ligand for the alpha-v/beta-3 and alpha-v/beta-5 receptors. Also binds to phosphatidylserine-enriched cell surfaces in a receptor-independent manner. Zona pellucida-binding protein which may play a role in gamete interaction. This is Lactadherin (MFGE8) from Sus scrofa (Pig).